The sequence spans 239 residues: MSTPHINAPLDAFADTILMPGDPLRAKLIAETYLENVVQVTDVRGMLGFTGEFKGRKISVMGHGMGAPSASIYFHELMTTYKVKNFIRIGSCGAIHDDVKLKDLIVAIGASTDSKMNRIRFKDNDFAATANYNMLSECVNTLKTTDINYLVGNVFSSDLFYRPDEEQYDMMARYGILGVEMEVNALYSAAAENHCNAVALCTVTDHIKNHEHLTADERRTELHEMINVALDVALKLPTE.

Position 5 (H5) interacts with a purine D-ribonucleoside. Phosphate contacts are provided by residues G21, R25, R44, and 88 to 91 (RIGS). A purine D-ribonucleoside is bound by residues 180 to 182 (EME) and 204 to 205 (TD). Residue D205 is the Proton donor of the active site.

Belongs to the PNP/UDP phosphorylase family. In terms of assembly, homohexamer; trimer of homodimers.

It catalyses the reaction a purine D-ribonucleoside + phosphate = a purine nucleobase + alpha-D-ribose 1-phosphate. The catalysed reaction is a purine 2'-deoxy-D-ribonucleoside + phosphate = a purine nucleobase + 2-deoxy-alpha-D-ribose 1-phosphate. In terms of biological role, catalyzes the reversible phosphorolytic breakdown of the N-glycosidic bond in the beta-(deoxy)ribonucleoside molecules, with the formation of the corresponding free purine bases and pentose-1-phosphate. This chain is Purine nucleoside phosphorylase DeoD-type, found in Aliivibrio fischeri (strain ATCC 700601 / ES114) (Vibrio fischeri).